Here is a 661-residue protein sequence, read N- to C-terminus: uncharacterized protein (661 aa).

An N-terminal signal peptide occupies residues Met1 to Ala24. 6 consecutive transmembrane segments (helical) span residues Ile226–Thr246, Ile254–Leu274, Ile410–Ile430, Cys436–Phe456, Val469–Thr489, and Val562–Phe582. The disordered stretch occupies residues Gly629–Lys661.

It belongs to the TrbL/VirB6 family.

Its subcellular location is the cell membrane. This is an uncharacterized protein from Rickettsia conorii (strain ATCC VR-613 / Malish 7).